The chain runs to 840 residues: OTU domain-containing protein 7B (840 aa).

The interval 49 to 88 (AGNLSPPFSGGSTCPKTPEKGGSDREPTRPSRPILQRQDD) is disordered. The span at 65 to 77 (TPEKGGSDREPTR) shows a compositional bias: basic and acidic residues. The residue at position 100 (Ser-100) is a Phosphoserine. The interval 152–401 (ERDLIEQSML…AVDPGKGWEW (250 aa)) is TRAF-binding. Positions 167–440 (AGRLNWWVSM…VKWIPLSSDS (274 aa)) are catalytic. Residues 183–365 (LLPLATTGDG…QAHFSALVSM (183 aa)) form the OTU domain. Residues 187 to 193 (ATTGDGN) are regulatory loop. The active site involves Asp-191. The Nucleophile role is filled by Cys-194. The active-site Proton acceptor is the His-358. The span at 440–452 (SQAPLAQPESPTA) shows a compositional bias: polar residues. Disordered stretches follow at residues 440-592 (SQAP…YSQE) and 653-710 (IMNG…VHCQ). Basic and acidic residues-rich tracts occupy residues 456 to 471 (DEPR…DKES) and 488 to 500 (SKRD…KRAD). Phosphoserine is present on residues Ser-464, Ser-467, and Ser-471. Residues 483-498 (RRKEKSKRDREKDKKR) carry the Nuclear localization signal motif. Residues 531 to 541 (KPGGLGSGSGI) show a composition bias toward gly residues. Position 730 is a phosphothreonine (Thr-730). The segment at 793–828 (PPTQTKCKQPNCSFYGHPETNNLCSCCYREELRRRE) adopts an A20-type zinc-finger fold. Zn(2+) contacts are provided by Cys-799, Cys-804, Cys-816, and Cys-819.

Belongs to the peptidase C64 family. As to quaternary structure, interacts with TRAF6. Interacts with PARK7, leading to inhibit deubiquitinase activity. Interacts with EGFR, ITCH and NEDD4. Interacts with TRAF3. Interacts with ZAP70 in activated T cells, but not in resting T cells. Phosphorylated by EGFR.

Its subcellular location is the cytoplasm. The protein resides in the nucleus. It carries out the reaction Thiol-dependent hydrolysis of ester, thioester, amide, peptide and isopeptide bonds formed by the C-terminal Gly of ubiquitin (a 76-residue protein attached to proteins as an intracellular targeting signal).. Its activity is regulated as follows. Deubiquitinase activity is inhibited following interaction with PARK7. Its function is as follows. Negative regulator of the non-canonical NF-kappa-B pathway that acts by mediating deubiquitination of TRAF3, an inhibitor of the NF-kappa-B pathway, thereby acting as a negative regulator of B-cell responses. In response to non-canonical NF-kappa-B stimuli, deubiquitinates 'Lys-48'-linked polyubiquitin chains of TRAF3, preventing TRAF3 proteolysis and over-activation of non-canonical NF-kappa-B. Negatively regulates mucosal immunity against infections. Deubiquitinates ZAP70, and thereby regulates T cell receptor (TCR) signaling that leads to the activation of NF-kappa-B. Plays a role in T cell homeostasis and is required for normal T cell responses, including production of IFNG and IL2. Mediates deubiquitination of EGFR. Has deubiquitinating activity toward 'Lys-11', 'Lys-48' and 'Lys-63'-linked polyubiquitin chains. Has a much higher catalytic rate with 'Lys-11'-linked polyubiquitin chains (in vitro); however the physiological significance of these data are unsure. Hydrolyzes both linear and branched forms of polyubiquitin. Acts as a regulator of mTORC1 and mTORC2 assembly by mediating 'Lys-63'-linked deubiquitination of MLST8, thereby promoting assembly of the mTORC2 complex, while inibiting formation of the mTORC1 complex. This Mus musculus (Mouse) protein is OTU domain-containing protein 7B (Otud7b).